A 402-amino-acid polypeptide reads, in one-letter code: Lipid-A-disaccharide synthase (402 aa).

It belongs to the LpxB family.

The enzyme catalyses a lipid X + a UDP-2-N,3-O-bis[(3R)-3-hydroxyacyl]-alpha-D-glucosamine = a lipid A disaccharide + UDP + H(+). It participates in bacterial outer membrane biogenesis; LPS lipid A biosynthesis. Functionally, condensation of UDP-2,3-diacylglucosamine and 2,3-diacylglucosamine-1-phosphate to form lipid A disaccharide, a precursor of lipid A, a phosphorylated glycolipid that anchors the lipopolysaccharide to the outer membrane of the cell. The chain is Lipid-A-disaccharide synthase from Cupriavidus pinatubonensis (strain JMP 134 / LMG 1197) (Cupriavidus necator (strain JMP 134)).